A 283-amino-acid chain; its full sequence is Non-selective voltage-gated ion channel VDAC1 (283 aa).

Alanine 2 is subject to N-acetylalanine. Position 12 (lysine 12) interacts with ATP. Residue lysine 12 forms a Glycyl lysine isopeptide (Lys-Gly) (interchain with G-Cter in ubiquitin) linkage. A Phosphoserine modification is found at serine 13. Residue threonine 19 is modified to Phosphothreonine. Lysine 20 serves as a coordination point for ATP. Lysine 20 carries the post-translational modification N6-acetyllysine; alternate. Lysine 20 carries the N6-succinyllysine; alternate modification. Lysine 20 is covalently cross-linked (Glycyl lysine isopeptide (Lys-Gly) (interchain with G-Cter in ubiquitin); alternate). 2 beta stranded membrane-spanning segments follow: residues 26–35 (LIKLDLKTKS) and 39–47 (LEFTSSGSA). Glycyl lysine isopeptide (Lys-Gly) (interchain with G-Cter in ubiquitin) cross-links involve residues lysine 53 and lysine 61. Residues 54-64 (VTGSLETKYRW) form a beta stranded membrane-spanning segment. Tyrosine 67 bears the Phosphotyrosine mark. 3 consecutive transmembrane segments (beta stranded) span residues 69-76 (LTFTEKWN), 80-89 (TLGTEITVED), and 95-104 (LKLTFDSSFS). A Phosphothreonine modification is found at threonine 107. Lysine 109 is modified (N6-acetyllysine; alternate). Lysine 109 is covalently cross-linked (Glycyl lysine isopeptide (Lys-Gly) (interchain with G-Cter in ubiquitin); alternate). A Glycyl lysine isopeptide (Lys-Gly) (interchain with G-Cter in ubiquitin) cross-link involves residue lysine 110. Transmembrane regions (beta stranded) follow at residues 111 to 120 (NAKIKTGYKR), 123 to 130 (INLGCDMD), 137 to 145 (SIRGALVLG), and 150 to 158 (LAGYQMNFE). Lysine 161 participates in a covalent cross-link: Glycyl lysine isopeptide (Lys-Gly) (interchain with G-Cter in ubiquitin). Transmembrane regions (beta stranded) follow at residues 163 to 175 (RVTQ…GYKT), 178 to 185 (FQLHTNVN), 189 to 198 (EFGGSIYQKV), 202 to 211 (LETAVNLAWT), 218 to 227 (RFGIAAKYQI), and 231 to 238 (ACFSAKVN). Position 193 is a phosphoserine; by NEK1 (serine 193). Serine 240 carries the phosphoserine modification. Position 242-244 (242-244 (LIG)) interacts with NAD(+). A beta stranded transmembrane segment spans residues 242–251 (LIGLGYTQTL). At lysine 252 the chain carries N6-acetyllysine. The beta stranded transmembrane segment at 254-263 (GIKLTLSALL) threads the bilayer. 260 to 264 (SALLD) is an NAD(+) binding site. Position 266 is an N6-acetyllysine; alternate (lysine 266). A Glycyl lysine isopeptide (Lys-Gly) (interchain with G-Cter in ubiquitin); alternate cross-link involves residue lysine 266. Residues 273-282 (HKLGLGLEFQ) traverse the membrane as a beta stranded segment. Lysine 274 is covalently cross-linked (Glycyl lysine isopeptide (Lys-Gly) (interchain with G-Cter in ubiquitin)).

Belongs to the eukaryotic mitochondrial porin family. In terms of assembly, homodimer and homotrimer; in response to cyclic AMP or calcium; oligomerization is required for scramblase activity. Component of the mitochondrial permeability transition pore complex (mPTPC), at least composed of SPG7, VDAC1 and PPIF. Interacts with SPG7, NIPSNAP2 and SLC25A30. Interacts with hexokinases including HK1. The HK1-VDAC1 complex interacts with ATF2. Interacts with BCL2L1. Interacts with BAK1. Interacts with RTL10/BOP (via BH3 domain). Interacts with amyloid-beta and APP; induces VDAC1 dephosphorylation. Interacts with TMEM41B. Interacts with BCAP31. Interacts with HSPA9; this interaction couples ITPR1 to VDAC1. (Microbial infection) Interacts with influenza A virus PB1-F2 protein. Post-translationally, phosphorylation at Ser-193 by NEK1 promotes the closed conformational state preventing excessive mitochondrial membrane permeability and subsequent apoptotic cell death after injury. Phosphorylation by the AKT-GSK3B axis stabilizes the protein probably by preventing ubiquitin-mediated proteasomal degradation. Ubiquitinated. Undergoes monoubiquitination and polyubiquitination by PRKN; monoubiquitination at Lys-274 inhibits apoptosis, whereas polyubiquitination leads to its degradation and promotes mitophagy. Deubiquitinated by USP30. In terms of tissue distribution, expressed in erythrocytes (at protein level). Expressed in heart, liver and skeletal muscle.

The protein localises to the mitochondrion outer membrane. It localises to the cell membrane. It is found in the membrane raft. It carries out the reaction chloride(in) = chloride(out). It catalyses the reaction K(+)(in) = K(+)(out). The enzyme catalyses ATP(in) = ATP(out). The catalysed reaction is Ca(2+)(in) = Ca(2+)(out). It carries out the reaction Na(+)(in) = Na(+)(out). It catalyses the reaction Mg(2+)(in) = Mg(2+)(out). The enzyme catalyses L-glutamate(out) = L-glutamate(in). The catalysed reaction is dopamine(out) = dopamine(in). It carries out the reaction acetylcholine(in) = acetylcholine(out). It catalyses the reaction Fe(III)-[cytochrome c](out) = Fe(III)-[cytochrome c](in). The enzyme catalyses a 1,2-diacyl-sn-glycero-3-phosphocholine(in) = a 1,2-diacyl-sn-glycero-3-phosphocholine(out). The catalysed reaction is a 1,2-diacyl-sn-glycero-3-phospho-L-serine(in) = a 1,2-diacyl-sn-glycero-3-phospho-L-serine(out). With respect to regulation, inhibited by nitric oxide. In terms of biological role, non-selective voltage-gated ion channel that mediates the transport of anions and cations through the mitochondrion outer membrane and plasma membrane. The channel at the outer mitochondrial membrane allows diffusion of small hydrophilic molecules; in the plasma membrane it is involved in cell volume regulation and apoptosis. It adopts an open conformation at low or zero membrane potential and a closed conformation at potentials above 30-40 mV. The open state has a weak anion selectivity whereas the closed state is cation-selective. Binds various signaling molecules, including the sphingolipid ceramide, the phospholipid phosphatidylcholine, and the sterols cholesterol and oxysterol. In depolarized mitochondria, acts downstream of PRKN and PINK1 to promote mitophagy or prevent apoptosis; polyubiquitination by PRKN promotes mitophagy, while monoubiquitination by PRKN decreases mitochondrial calcium influx which ultimately inhibits apoptosis. May participate in the formation of the permeability transition pore complex (PTPC) responsible for the release of mitochondrial products that triggers apoptosis. May mediate ATP export from cells. Part of a complex composed of HSPA9, ITPR1 and VDAC1 that regulates mitochondrial calcium-dependent apoptosis by facilitating calcium transport from the ER lumen to the mitochondria intermembrane space thus providing calcium for the downstream calcium channel MCU that directly releases it into mitochondria matrix. Mediates cytochrome c efflux. Functionally, catalyzes the scrambling of phospholipids across the outer mitochondrial membrane; the mechanism is unrelated to channel activity and is capable of translocating both anionic and zwitterionic phospholipids. This Homo sapiens (Human) protein is Non-selective voltage-gated ion channel VDAC1.